Here is a 293-residue protein sequence, read N- to C-terminus: Glutamyl-Q tRNA(Asp) synthetase (293 aa).

L-glutamate is bound by residues 8–12 (RFAPT) and glutamate 44. Residues 11–21 (PTPSGYLHFGS) carry the 'HIGH' region motif. Zn(2+) contacts are provided by cysteine 100, cysteine 102, tyrosine 114, and cysteine 118. Tyrosine 171 and arginine 189 together coordinate L-glutamate. The short motif at 227-231 (KLGKS) is the 'KMSKS' region element. Residue lysine 230 coordinates ATP.

It belongs to the class-I aminoacyl-tRNA synthetase family. GluQ subfamily. The cofactor is Zn(2+).

Functionally, catalyzes the tRNA-independent activation of glutamate in presence of ATP and the subsequent transfer of glutamate onto a tRNA(Asp). Glutamate is transferred on the 2-amino-5-(4,5-dihydroxy-2-cyclopenten-1-yl) moiety of the queuosine in the wobble position of the QUC anticodon. In Pseudomonas aeruginosa (strain LESB58), this protein is Glutamyl-Q tRNA(Asp) synthetase.